The sequence spans 227 residues: MEATFFTLPSSTSHSYPFSLKSHFNNSLTLPTHPHFKPKSKNLTIRSAISRTKKEETVETVKQQLEDCYLLAGIGYKGLTVKQFQELRSQLPDTTKLLVAKNTLVLKAIEGTKWEALKPCMKGMNAWLFVHSEEIPAALKPYRTFQKEKKLEENDFTGAVFEGKFYGPEEFKALETLPTRAEIYAQLLGSLKGPASAVVGTIQAPARNLVMVLKAYVKKLEEEGGSQ.

The transit peptide at 1–47 directs the protein to the chloroplast; it reads MEATFFTLPSSTSHSYPFSLKSHFNNSLTLPTHPHFKPKSKNLTIRS.

It belongs to the universal ribosomal protein uL10 family. In terms of assembly, part of the 50S ribosomal subunit.

The protein localises to the plastid. It localises to the chloroplast. Its function is as follows. This protein binds directly to 23S ribosomal RNA. In Nicotiana tabacum (Common tobacco), this protein is Large ribosomal subunit protein uL10c (RPL10).